Reading from the N-terminus, the 351-residue chain is Transcription elongation factor A N-terminal and central domain-containing protein (351 aa).

One can recognise a TFIIS N-terminal domain in the interval 5-82 (NQIAARASLI…SKWKAVYKQT (78 aa)). 2 disordered regions span residues 86-119 (ARNSPKLFPVRGNKEENSGPSHDPSQNETLGICS) and 144-169 (LKPKEEHFGDGDPESTGKRSSELLDP). A compositionally biased stretch (polar residues) spans 103 to 119 (SGPSHDPSQNETLGICS). Residues 145 to 165 (KPKEEHFGDGDPESTGKRSSE) show a composition bias toward basic and acidic residues. The TFIIS central domain occupies 173-289 (MRTKCIELLY…EHYLPQVIDG (117 aa)).

This Homo sapiens (Human) protein is Transcription elongation factor A N-terminal and central domain-containing protein (TCEANC).